The primary structure comprises 287 residues: Cis-prenyltransferase 7, chloroplastic (287 aa).

Residues 1–34 (MLSLGFSLPPPSDNKLIITNNNQYNYRTNLANVC) constitute a chloroplast transit peptide. Aspartate 61 is a catalytic residue.

The protein belongs to the UPP synthase family. The cofactor is Mg(2+). Expressed in leaf trichomes and stem trichomes.

It is found in the plastid. Its subcellular location is the chloroplast. Functionally, uses geranylgeranyl diphosphate to catalyze the cis-prenyl chain elongation and produce polyprenyl diphosphate with a chain of 35 carbons. In Solanum lycopersicum (Tomato), this protein is Cis-prenyltransferase 7, chloroplastic.